Consider the following 197-residue polypeptide: MKLLEDRINTDGQVLGQDILKVDRFLTHQVDYQLMKEIGKRFAQVYADAGVTKVVTIEASGIAPALYAAESLNVPMIFAKKAKNVTMNDDLLITEVYSFTKKLTSTVQISSKLIEEGDKVLIIDDFLANGQAALGLVHLMEQAKAEVVGLGMVIEKSFQDGRQKLLDQGMKLTSLARIEKFEDGKVIFAPADDIAFD.

Residues L20 and T27 each coordinate xanthine. 5-phospho-alpha-D-ribose 1-diphosphate is bound at residue 128-132 (ANGQA). K156 contacts xanthine.

It belongs to the purine/pyrimidine phosphoribosyltransferase family. Xpt subfamily. Homodimer.

The protein resides in the cytoplasm. It carries out the reaction XMP + diphosphate = xanthine + 5-phospho-alpha-D-ribose 1-diphosphate. Its pathway is purine metabolism; XMP biosynthesis via salvage pathway; XMP from xanthine: step 1/1. In terms of biological role, converts the preformed base xanthine, a product of nucleic acid breakdown, to xanthosine 5'-monophosphate (XMP), so it can be reused for RNA or DNA synthesis. This Lactococcus lactis subsp. cremoris (strain MG1363) protein is Xanthine phosphoribosyltransferase.